Here is a 340-residue protein sequence, read N- to C-terminus: Tetraacyldisaccharide 4'-kinase (340 aa).

Residue 51-58 (HMGGAGKT) coordinates ATP.

The protein belongs to the LpxK family.

It carries out the reaction a lipid A disaccharide + ATP = a lipid IVA + ADP + H(+). It functions in the pathway glycolipid biosynthesis; lipid IV(A) biosynthesis; lipid IV(A) from (3R)-3-hydroxytetradecanoyl-[acyl-carrier-protein] and UDP-N-acetyl-alpha-D-glucosamine: step 6/6. In terms of biological role, transfers the gamma-phosphate of ATP to the 4'-position of a tetraacyldisaccharide 1-phosphate intermediate (termed DS-1-P) to form tetraacyldisaccharide 1,4'-bis-phosphate (lipid IVA). The chain is Tetraacyldisaccharide 4'-kinase from Rhodopseudomonas palustris (strain ATCC BAA-98 / CGA009).